Reading from the N-terminus, the 300-residue chain is 17-beta-hydroxysteroid dehydrogenase 13 (300 aa).

The first 19 residues, 1 to 19, serve as a signal peptide directing secretion; that stretch reads MNLILELLLLVGIIIYSYL. Ser33 carries the phosphoserine modification. 40–67 serves as a coordination point for NAD(+); that stretch reads LITGAGHGIGRLTAYEFAKQKSRLVLWD. A Phosphoserine modification is found at Ser69. Lys79 carries the post-translational modification N6-acetyllysine. Ser172 lines the substrate pocket. Catalysis depends on Tyr185, which acts as the Proton acceptor. Residue Lys189 coordinates NAD(+).

It belongs to the short-chain dehydrogenases/reductases (SDR) family.

It localises to the lipid droplet. Its subcellular location is the endoplasmic reticulum. The catalysed reaction is 17beta-estradiol + NAD(+) = estrone + NADH + H(+). It carries out the reaction all-trans-retinol + NAD(+) = all-trans-retinal + NADH + H(+). It catalyses the reaction all-trans-retinal + NAD(+) + H2O = all-trans-retinoate + NADH + 2 H(+). Functionally, plays a pivotal role in hepatic lipid metabolism. In vitro, it catalyzes the oxidation of a variety of lipid substrates, including 17beta-estradiol, retinol, retinal, and leukotriene B4. The polypeptide is 17-beta-hydroxysteroid dehydrogenase 13 (Hsd17b13) (Rattus norvegicus (Rat)).